Consider the following 312-residue polypeptide: Malate dehydrogenase (312 aa).

Residues glycine 10–glycine 15 and aspartate 34 each bind NAD(+). Residues arginine 85 and arginine 91 each coordinate substrate. NAD(+) is bound by residues asparagine 98 and leucine 121–asparagine 123. Substrate-binding residues include asparagine 123 and arginine 154. The Proton acceptor role is filled by histidine 178.

This sequence belongs to the LDH/MDH superfamily. MDH type 3 family.

It catalyses the reaction (S)-malate + NAD(+) = oxaloacetate + NADH + H(+). In terms of biological role, catalyzes the reversible oxidation of malate to oxaloacetate. In Staphylococcus saprophyticus subsp. saprophyticus (strain ATCC 15305 / DSM 20229 / NCIMB 8711 / NCTC 7292 / S-41), this protein is Malate dehydrogenase.